The chain runs to 312 residues: Olfactory receptor-like protein COR5 (312 aa).

Residues 1–26 (MALGNCTTPTTFILSGLTDNPRLQMP) are Extracellular-facing. Asn-5 carries an N-linked (GlcNAc...) asparagine glycan. A helical transmembrane segment spans residues 27-49 (LFMVFLAIYTITLLANLGLIALI). Topologically, residues 50–57 (SVDFHLQT) are cytoplasmic. A helical transmembrane segment spans residues 58–79 (PMYIFLQNLSFTDAAYSTVITP). The Extracellular segment spans residues 80–100 (KMLATFLEERRTISYVGCILQ). Cys-97 and Cys-179 are oxidised to a cystine. Residues 101–120 (YFSFVLLTSSECLLLAVMAY) form a helical membrane-spanning segment. Over 121–139 (DRYVAICKPLLYPAIMTKA) the chain is Cytoplasmic. A helical membrane pass occupies residues 140–164 (VCWRLVEGLYSLAFLNSLVHTSGLL). Residues 165-205 (KLSFCSSNVVNHFFCDNSPLFQISSSSTTLNELLVFIFGSW) are Extracellular-facing. A helical transmembrane segment spans residues 206 to 226 (FAMSSIITTPISYVFIILTVV). The Cytoplasmic segment spans residues 227–239 (RIRSKDGKYKAFS). A helical transmembrane segment spans residues 240–260 (TCTSHLMAVSLFHGTVIFMYL). At 261–271 (RPVKLFSLDTD) the chain is on the extracellular side. Residues 272-292 (KIASLFYTVVIPMLNPLIYSW) form a helical membrane-spanning segment. Topologically, residues 293–312 (RNKEVKDALRRVIATNVWIH) are cytoplasmic.

Belongs to the G-protein coupled receptor 1 family.

The protein resides in the cell membrane. In terms of biological role, odorant receptor. In Gallus gallus (Chicken), this protein is Olfactory receptor-like protein COR5 (COR5).